A 366-amino-acid chain; its full sequence is Methylthioribose-1-phosphate isomerase (366 aa).

Residues 53–55 (RGA), Arg90, and Gln203 each bind substrate. Asp244 (proton donor) is an active-site residue. Residue 254–255 (NK) coordinates substrate.

The protein belongs to the eIF-2B alpha/beta/delta subunits family. MtnA subfamily.

The enzyme catalyses 5-(methylsulfanyl)-alpha-D-ribose 1-phosphate = 5-(methylsulfanyl)-D-ribulose 1-phosphate. The protein operates within amino-acid biosynthesis; L-methionine biosynthesis via salvage pathway; L-methionine from S-methyl-5-thio-alpha-D-ribose 1-phosphate: step 1/6. Its function is as follows. Catalyzes the interconversion of methylthioribose-1-phosphate (MTR-1-P) into methylthioribulose-1-phosphate (MTRu-1-P). The sequence is that of Methylthioribose-1-phosphate isomerase from Methylocella silvestris (strain DSM 15510 / CIP 108128 / LMG 27833 / NCIMB 13906 / BL2).